Here is an 825-residue protein sequence, read N- to C-terminus: Glycerol-3-phosphate acyltransferase 1, mitochondrial (825 aa).

Residues 1 to 87 lie on the Cytoplasmic side of the membrane; sequence MDESALTLGT…FFNPSIPSLG (87 aa). Residues 80 to 120 are important for mitochondrial localization; sequence NPSIPSLGLRNVIYINETHTRHRGWLARRLSYVLFIQERDV. Residues 88–118 lie within the membrane without spanning it; sequence LRNVIYINETHTRHRGWLARRLSYVLFIQER. Over 119–825 the chain is Cytoplasmic; that stretch reads DVHKGMFATN…LEYILSLVVL (707 aa). The short motif at 230 to 235 is the HXXXXD motif element; sequence HRSHID. Residues Arg278, Arg279, Lys288, Arg293, and Arg328 each contribute to the CoA site. The residue at position 380 (Ser380) is a Phosphoserine. The interval 435–455 is disordered; the sequence is SRPSGAADEGTDMSINESRNA. Residue Arg461 participates in CoA binding. Residues Ser685 and Ser692 each carry the phosphoserine modification. An N6-acetyllysine mark is found at Lys777 and Lys781.

This sequence belongs to the GPAT/DAPAT family. In terms of tissue distribution, highly expressed in adipose tissues and lung. Low expression in liver.

Its subcellular location is the mitochondrion outer membrane. The catalysed reaction is sn-glycerol 3-phosphate + an acyl-CoA = a 1-acyl-sn-glycero-3-phosphate + CoA. It carries out the reaction (9Z,12Z)-octadecadienoyl-CoA + sn-glycerol 3-phosphate = 1-(9Z,12Z)-octadecadienoyl-sn-glycero-3-phosphate + CoA. It catalyses the reaction sn-glycerol 3-phosphate + (9Z)-octadecenoyl-CoA = 1-(9Z-octadecenoyl)-sn-glycero-3-phosphate + CoA. The enzyme catalyses sn-glycerol 3-phosphate + octadecanoyl-CoA = 1-octadecanoyl-sn-glycero-3-phosphate + CoA. The catalysed reaction is sn-glycerol 3-phosphate + hexadecanoyl-CoA = 1-hexadecanoyl-sn-glycero-3-phosphate + CoA. It carries out the reaction dodecanoyl-CoA + sn-glycerol 3-phosphate = 1-dodecanoyl-sn-glycerol 3-phosphate + CoA. It catalyses the reaction 1-acyl-sn-glycero-3-phospho-(1'-sn-glycerol) + an acyl-CoA = a 1,2-diacyl-sn-glycero-3-phospho-(1'-sn-glycerol) + CoA. It participates in phospholipid metabolism; CDP-diacylglycerol biosynthesis; CDP-diacylglycerol from sn-glycerol 3-phosphate: step 1/3. Its function is as follows. Mitochondrial membrane protein that catalyzes the essential first step of biosynthesis of glycerolipids such as triglycerides, phosphatidic acids and lysophosphatidic acids. Esterifies acyl-group from acyl-coenzyme A (acyl-CoA) to the sn-1 position of glycerol-3-phosphate, to produce lysophosphatidic acid. Has a narrow hydrophobic binding cleft that selects for a linear acyl chain. Catalytic activity is higher for substrates with a 16-carbon acyl chain. The protein is Glycerol-3-phosphate acyltransferase 1, mitochondrial of Bos taurus (Bovine).